The following is an 89-amino-acid chain: MAKESMKAREVKRAKLVAKYAAKRAQLKAEGNYEALQALPKNASPVRLHNRCKITGRPKGYVRQFGISRIQLREMASNGLIPGVKKASW.

It belongs to the universal ribosomal protein uS14 family. Part of the 30S ribosomal subunit. Contacts proteins S3 and S10.

Its function is as follows. Binds 16S rRNA, required for the assembly of 30S particles and may also be responsible for determining the conformation of the 16S rRNA at the A site. The polypeptide is Small ribosomal subunit protein uS14 (Parabacteroides distasonis (strain ATCC 8503 / DSM 20701 / CIP 104284 / JCM 5825 / NCTC 11152)).